The following is a 493-amino-acid chain: Trans-aconitate decarboxylase 1 (493 aa).

The interval 1 to 22 (MAPALNANPTTKRDELSAPSAS) is disordered.

This sequence belongs to the class-II fumarase/aspartase family.

The protein localises to the cytoplasm. The protein resides in the cytosol. It localises to the nucleus. It carries out the reaction trans-aconitate + H(+) = itaconate + CO2. It functions in the pathway secondary metabolite biosynthesis. Functionally, trans-aconitate decarboxylase; part of the gene cluster that mediates the biosynthesis of itaconic acid and 2-hydroxyparaconate. Cis-aconitate is secreted by the mitochondrial tricarboxylate transporter MTT1. In the cytosol cis-aconitate is converted into trans-aconitate via isomerization by the aconitate-delta-isomerase ADI1. Decarboxylation of trans-aconitate by the trans-aconitate decarboxylase TAD1 then leads then to the production of itaconic acid. The cytochrome P450 monooxygenase CYP3 further converts itaconate to 2-hydroxyparaconate via oxidation of the double bond, leading to a transient epoxide, which can subsequently be lactonized to produce 2-hydroxyparaconate. Secretion of itaconate and possibly 2-hydroxyparaconate into the medium is mediated by the major facilitator ITP1. The glyoxalase domain-containing protein RDO1 is not involved in the biosynthesis of itaconate and 2-hydroxyparaconate, however, it might play a role in the further conversion of 2-hydroxyparaconate to itatartarate. This Mycosarcoma maydis (Corn smut fungus) protein is Trans-aconitate decarboxylase 1.